Here is a 303-residue protein sequence, read N- to C-terminus: UDP-3-O-acyl-N-acetylglucosamine deacetylase (303 aa).

Zn(2+) contacts are provided by histidine 78, histidine 237, and aspartate 241. Histidine 264 serves as the catalytic Proton donor.

This sequence belongs to the LpxC family. Requires Zn(2+) as cofactor.

It carries out the reaction a UDP-3-O-[(3R)-3-hydroxyacyl]-N-acetyl-alpha-D-glucosamine + H2O = a UDP-3-O-[(3R)-3-hydroxyacyl]-alpha-D-glucosamine + acetate. It participates in glycolipid biosynthesis; lipid IV(A) biosynthesis; lipid IV(A) from (3R)-3-hydroxytetradecanoyl-[acyl-carrier-protein] and UDP-N-acetyl-alpha-D-glucosamine: step 2/6. Its function is as follows. Catalyzes the hydrolysis of UDP-3-O-myristoyl-N-acetylglucosamine to form UDP-3-O-myristoylglucosamine and acetate, the committed step in lipid A biosynthesis. In Stenotrophomonas maltophilia (strain K279a), this protein is UDP-3-O-acyl-N-acetylglucosamine deacetylase.